Reading from the N-terminus, the 429-residue chain is Probable proton-coupled zinc antiporter SLC30A4 (429 aa).

Over 1 to 113 (MAGSGAWKRL…LLKQRKVKTR (113 aa)) the chain is Cytoplasmic. The chain crosses the membrane as a helical span at residues 114–134 (LTIAAVLYLLFMIGELVGGYI). Topologically, residues 135-143 (ANSLAIMTD) are lumenal. The chain crosses the membrane as a helical span at residues 144-164 (ALHMLTDLSAIILTLLALWLS). Positions 146 and 150 each coordinate Zn(2+). Over 165 to 178 (SKSPTKRFTFGFHR) the chain is Cytoplasmic. The helical transmembrane segment at 179 to 199 (LEVLSAMISVLLVYILMGFLL) threads the bilayer. At 200–216 (YEAVQRTIHMKYEINGD) the chain is on the lumenal side. Residues 217–237 (IMLITAAIGVAVNVIMGFLLN) form a helical membrane-spanning segment. The Cytoplasmic portion of the chain corresponds to 238–274 (QSGHHHAHSHSLPSNSPTTGPRCGHNQGQDSLAVRAA). The zinc binding stretch occupies residues 240–264 (GHHHAHSHSLPSNSPTTGPRCGHNQ). The helical transmembrane segment at 275–295 (FVHALGDLVQSVGVLIAAYII) threads the bilayer. Zn(2+) contacts are provided by H277 and D281. Topologically, residues 296 to 310 (RFKPEYRIADPICTY) are lumenal. Residues 311–331 (VFSLLVAFTTFRIIWDTVVII) traverse the membrane as a helical segment. The Cytoplasmic portion of the chain corresponds to 332-429 (LEGVPSHLNV…TCANCQSSSS (98 aa)).

It belongs to the cation diffusion facilitator (CDF) transporter (TC 2.A.4) family. SLC30A subfamily. Homodimerization could regulate efficiency for zinc transport. Interacts with TMEM163.

It localises to the endosome membrane. It is found in the late endosome membrane. The protein localises to the lysosome membrane. It catalyses the reaction Zn(2+)(in) + 2 H(+)(out) = Zn(2+)(out) + 2 H(+)(in). In terms of biological role, probable proton-coupled zinc ion antiporter mediating zinc import from cytoplasm potentially into the endocytic compartment. Controls zinc deposition in milk. In Bos taurus (Bovine), this protein is Probable proton-coupled zinc antiporter SLC30A4.